A 161-amino-acid chain; its full sequence is Regulator of ribonuclease activity A (161 aa).

The protein belongs to the RraA family. In terms of assembly, homotrimer. Binds to both RNA-binding sites in the C-terminal region of Rne and to RhlB.

Its subcellular location is the cytoplasm. Globally modulates RNA abundance by binding to RNase E (Rne) and regulating its endonucleolytic activity. Can modulate Rne action in a substrate-dependent manner by altering the composition of the degradosome. Modulates RNA-binding and helicase activities of the degradosome. The protein is Regulator of ribonuclease activity A of Erwinia tasmaniensis (strain DSM 17950 / CFBP 7177 / CIP 109463 / NCPPB 4357 / Et1/99).